The sequence spans 350 residues: MTVRIALDAMGGDNAPRAVIEGMLEVQKKRPEVVFTLVGIESRIRQELEQMGVEEDGFRIWHASEVVEMDEKPAVALRTKKDSSMRVGANLVKENQVDAFVSAGNTGALMATAKFVLKTLRGIDRPAIASVIPAVGGETLMLDLGANVDCSSEHLCQFALMGSIFANAVLGVRAPRVGLLNIGEEDTKGNEQVRDAGEQLKARSATLIPGGSYVGNVEGTDIFKDTVDVVVCDGFVGNVSLKSIEGTAKMLTHYLRGAFTKNWKTKLMYLIARPALRCFRDEMDPRKHNGAILLGLNGVVVKSHGGADSVAYAHAIHVAVDLAEKQVTKRIRDAVAKFRAEGTQPSDPAV.

It belongs to the PlsX family. As to quaternary structure, homodimer. Probably interacts with PlsY.

Its subcellular location is the cytoplasm. It carries out the reaction a fatty acyl-[ACP] + phosphate = an acyl phosphate + holo-[ACP]. Its pathway is lipid metabolism; phospholipid metabolism. Functionally, catalyzes the reversible formation of acyl-phosphate (acyl-PO(4)) from acyl-[acyl-carrier-protein] (acyl-ACP). This enzyme utilizes acyl-ACP as fatty acyl donor, but not acyl-CoA. This chain is Phosphate acyltransferase, found in Magnetococcus marinus (strain ATCC BAA-1437 / JCM 17883 / MC-1).